Reading from the N-terminus, the 486-residue chain is Endoglucanase 16 (486 aa).

The N-terminal stretch at 1–30 is a signal peptide; the sequence is MANYKGRGNVMIRSMLLGLYGIINIVCVNG. Residue Asn29 is glycosylated (N-linked (GlcNAc...) asparagine). The active-site Nucleophile is Asp87. Residues His407, Asp458, and Glu467 contribute to the active site.

It belongs to the glycosyl hydrolase 9 (cellulase E) family.

It is found in the secreted. The catalysed reaction is Endohydrolysis of (1-&gt;4)-beta-D-glucosidic linkages in cellulose, lichenin and cereal beta-D-glucans.. In Arabidopsis thaliana (Mouse-ear cress), this protein is Endoglucanase 16.